A 443-amino-acid polypeptide reads, in one-letter code: MIKERKTELVEGFRHSVPYINTHRGKTFVIMLGGEAIEHDNFSSIVSDIGLLHSLGIRLVVVYGARPQIDANLAAHHHEPIYHKNTRVTDAKTLELVKQAAGLLQLDITARLSMSLNNTPLQGAHINVVSGNFTIAQPLGVDDGVDYCHSGRIRRIDEDAINRQLDNGAIVLMGPVAVSVTGESFNLTSEEIATQLAVKLKAEKMIGFCSSQGVTNSEGGIISELFPNEAQARVEELEAQGDYNSGTVRFLRGAVKACRSGVRRCHLISYQEDGSLLQELFSRDGIGTQIVMESAEQIRRATINDIGGILELIRPLEQQGILVRRSREQLEMEIDKFTIIQRDNMTIACAALYPFVEEKIGEMACVAVHPDYRSSSRGEVLLERVAAQARQMGLRKLFVLTTRSIHWFQERGFTPVDIELLPESKKKMYNYQRRSKVLMADLG.

Residues Glu-296–Gly-443 form the N-acetyltransferase domain.

This sequence belongs to the acetyltransferase family. ArgA subfamily. As to quaternary structure, homohexamer.

Its subcellular location is the cytoplasm. It carries out the reaction L-glutamate + acetyl-CoA = N-acetyl-L-glutamate + CoA + H(+). Its pathway is amino-acid biosynthesis; L-arginine biosynthesis; N(2)-acetyl-L-ornithine from L-glutamate: step 1/4. This chain is Amino-acid acetyltransferase (argA), found in Salmonella typhi.